A 660-amino-acid polypeptide reads, in one-letter code: Acetyl-coenzyme A synthetase (660 aa).

Residues 197–200 (RGGK) and Thr-317 each bind CoA. ATP-binding positions include 397-399 (GEP), 421-426 (DTWWQT), Asp-512, and Arg-528. Ser-536 serves as a coordination point for CoA. Arg-539 is an ATP binding site. Mg(2+)-binding residues include Val-550, His-552, and Val-555. Lys-625 is subject to N6-acetyllysine.

It belongs to the ATP-dependent AMP-binding enzyme family. Requires Mg(2+) as cofactor. Post-translationally, acetylated. Deacetylation by the SIR2-homolog deacetylase activates the enzyme.

The enzyme catalyses acetate + ATP + CoA = acetyl-CoA + AMP + diphosphate. Catalyzes the conversion of acetate into acetyl-CoA (AcCoA), an essential intermediate at the junction of anabolic and catabolic pathways. AcsA undergoes a two-step reaction. In the first half reaction, AcsA combines acetate with ATP to form acetyl-adenylate (AcAMP) intermediate. In the second half reaction, it can then transfer the acetyl group from AcAMP to the sulfhydryl group of CoA, forming the product AcCoA. The polypeptide is Acetyl-coenzyme A synthetase (Burkholderia lata (strain ATCC 17760 / DSM 23089 / LMG 22485 / NCIMB 9086 / R18194 / 383)).